We begin with the raw amino-acid sequence, 512 residues long: Cytochrome P450 monooxygenase ABA1 (512 aa).

The chain crosses the membrane as a helical span at residues 13–32; sequence HWLSGILAIATVYLATSYII. C458 is a heme binding site.

Belongs to the cytochrome P450 family. Heme serves as cofactor.

It localises to the membrane. It participates in hormone biosynthesis. Its function is as follows. Cytochrome P450 monooxygenase involved in the biosynthesis of abscisic acid (ABA), a phytohormone that acts antagonistically toward salicylic acid (SA), jasmonic acid (JA) and ethylene (ETH) signaling, to impede plant defense responses. During pathogen-host interaction, ABA plays a dual role in disease severity by increasing plant susceptibility and accelerating pathogenesis in the fungus itself. The first step of the pathway catalyzes the reaction from farnesyl diphosphate to alpha-ionylideneethane performed by the alpha-ionylideneethane synthase ABA3 via a three-step reaction mechanism involving 2 neutral intermediates, beta-farnesene and allofarnesene. The cytochrome P450 monooxygenase ABA1 might then be involved in the conversion of alpha-ionylideneethane to alpha-ionylideneacetic acid. Alpha-ionylideneacetic acid is further converted to abscisic acid in 2 steps involving the cytochrome P450 monooxygenase ABA2 and the short-chain dehydrogenase/reductase ABA4, via the intermediates 1'-deoxy-ABA or 1',4'-trans-diol-ABA, depending on the order of action of these 2 enzymes. ABA2 is responsible for the hydroxylation of carbon atom C-1' and ABA4 might be involved in the oxidation of the C-4' carbon atom. The sequence is that of Cytochrome P450 monooxygenase ABA1 from Pyricularia oryzae (strain Y34) (Rice blast fungus).